The primary structure comprises 584 residues: ETHYLENE INSENSITIVE 3-like 1 protein (584 aa).

A coiled-coil region spans residues 41–74 (YTDDEMDVDELEKRMWRDKMRLKRLKEQQSKCKE). The segment covering 67–80 (EQQSKCKEGVDGSK) has biased composition (basic and acidic residues). 2 disordered regions span residues 67–93 (EQQS…RKKM) and 565–584 (EGMG…SIWF).

Belongs to the EIN3 family. In terms of assembly, acts as a homodimer to bind the primary ethylene response element.

The protein resides in the nucleus. Its function is as follows. Probable transcription factor acting as a positive regulator in the ethylene response pathway. Could bind the primary ethylene response element present in the ETHYLENE-RESPONSE-FACTOR1 promoter. The chain is ETHYLENE INSENSITIVE 3-like 1 protein (EIL1) from Arabidopsis thaliana (Mouse-ear cress).